The primary structure comprises 502 residues: Bone morphogenetic protein receptor type-1B (502 aa).

An N-terminal signal peptide occupies residues 1–13; it reads MLLRSAGKLNVGT. The disordered stretch occupies residues 1 to 25; that stretch reads MLLRSAGKLNVGTKKEDGESTAPTP. The Extracellular portion of the chain corresponds to 14 to 126; sequence KKEDGESTAP…DFVDGPIHHR (113 aa). 5 disulfide bridges follow: C32-C53, C34-C38, C47-C71, C81-C95, and C96-C102. Residues 127-148 traverse the membrane as a helical segment; that stretch reads ALLISVTVCSLLLVLIILFCYF. The Cytoplasmic segment spans residues 149 to 502; that stretch reads RYKRQETRPR…KMSESQDIKL (354 aa). The region spanning 174–203 is the GS domain; it reads ESLRDLIEQSQSSGSGSGLPLLVQRTIAKQ. One can recognise a Protein kinase domain in the interval 204–494; that stretch reads IQMVKQIGKG…LRVKKTLAKM (291 aa). Residues 210–218 and K231 each bind ATP; that span reads IGKGRYGEV. Residue D332 is the Proton acceptor of the active site.

It belongs to the protein kinase superfamily. TKL Ser/Thr protein kinase family. TGFB receptor subfamily. As to quaternary structure, interacts with high affinity with GDF5; positively regulates chondrocyte differentiation. Interacts with SCUBE3. Interacts with TSC22D1/TSC-22. Interacts with TGFBR3. Mg(2+) is required as a cofactor. The cofactor is Mn(2+). Autophosphorylated.

It is found in the cell membrane. The enzyme catalyses L-threonyl-[receptor-protein] + ATP = O-phospho-L-threonyl-[receptor-protein] + ADP + H(+). The catalysed reaction is L-seryl-[receptor-protein] + ATP = O-phospho-L-seryl-[receptor-protein] + ADP + H(+). Its function is as follows. On ligand binding, forms a receptor complex consisting of two type II and two type I transmembrane serine/threonine kinases. Type II receptors phosphorylate and activate type I receptors which autophosphorylate, then bind and activate SMAD transcriptional regulators. Receptor for BMP7/OP-1 and GDF5. Positively regulates chondrocyte differentiation through GDF5 interaction. The sequence is that of Bone morphogenetic protein receptor type-1B (BMPR1B) from Homo sapiens (Human).